The following is a 120-amino-acid chain: uncharacterized protein (120 aa).

A helical transmembrane segment spans residues V47 to G63.

Its subcellular location is the membrane. This is an uncharacterized protein from Sinorhizobium fredii (strain NBRC 101917 / NGR234).